Reading from the N-terminus, the 208-residue chain is Cell death-inducing p53-target protein 1 (208 aa).

Composition is skewed to pro residues over residues M1–P13 and A50–V67. The segment at M1–H70 is disordered. One can recognise an LITAF domain in the interval A122 to R206. Zn(2+) contacts are provided by C142 and C145. A membrane-binding amphipathic helix region spans residues L164 to I184. Residues C194 and C197 each coordinate Zn(2+).

It belongs to the CDIP1/LITAF family.

It localises to the late endosome membrane. The protein localises to the lysosome membrane. Acts as an important p53/TP53-apoptotic effector. Regulates TNF-alpha-mediated apoptosis in a p53/TP53-dependent manner. The sequence is that of Cell death-inducing p53-target protein 1 (Cdip1) from Mus musculus (Mouse).